Reading from the N-terminus, the 189-residue chain is Xanthine phosphoribosyltransferase (189 aa).

2 residues coordinate xanthine: Leu20 and Asn27. 5-phospho-alpha-D-ribose 1-diphosphate is bound at residue 127–131 (AYGNA). Residue Lys155 coordinates xanthine.

It belongs to the purine/pyrimidine phosphoribosyltransferase family. Xpt subfamily. In terms of assembly, homodimer.

The protein localises to the cytoplasm. The enzyme catalyses XMP + diphosphate = xanthine + 5-phospho-alpha-D-ribose 1-diphosphate. It participates in purine metabolism; XMP biosynthesis via salvage pathway; XMP from xanthine: step 1/1. Functionally, converts the preformed base xanthine, a product of nucleic acid breakdown, to xanthosine 5'-monophosphate (XMP), so it can be reused for RNA or DNA synthesis. The sequence is that of Xanthine phosphoribosyltransferase from Bacteroides fragilis (strain ATCC 25285 / DSM 2151 / CCUG 4856 / JCM 11019 / LMG 10263 / NCTC 9343 / Onslow / VPI 2553 / EN-2).